The chain runs to 231 residues: MFSATGKRCFTIESLVAKESPITLEDPIRPTALSYSAPADSFLNGYQSPAGRALYPNPELVFSETVNHAPLSMHPHQLGSAPLQHPHFFGTQHREPLNFYPWVLRNRFFGHRFQGNDVSQDTLLLHGPFARKPKRIRTAFSPSQLLRLERAFEKNHYVVGAERKQLANSLSLSETQVKVWFQNRRTKYKRQKLEEEGPECTQKKKGNHHINRWRIATKQTGSEDIDVMSDA.

The homeobox DNA-binding region spans 133–192 (PKRIRTAFSPSQLLRLERAFEKNHYVVGAERKQLANSLSLSETQVKVWFQNRRTKYKRQK). A disordered region spans residues 193-231 (LEEEGPECTQKKKGNHHINRWRIATKQTGSEDIDVMSDA). A compositionally biased stretch (basic residues) spans 203-212 (KKKGNHHINR).

The protein belongs to the EMX homeobox family.

The protein resides in the nucleus. In terms of biological role, may function in combinations with OTX1/2 to specify cell fates in the developing central nervous system. The sequence is that of Homeobox protein EMX1 (emx1) from Danio rerio (Zebrafish).